A 403-amino-acid polypeptide reads, in one-letter code: S-adenosylmethionine synthase (403 aa).

Histidine 17 lines the ATP pocket. Position 19 (aspartate 19) interacts with Mg(2+). Glutamate 45 contributes to the K(+) binding site. Residues glutamate 58 and glutamine 104 each contribute to the L-methionine site. Residues 104-114 (QSPDIAQGVDT) form a flexible loop region. ATP is bound by residues 179-181 (DGK), 250-251 (KF), aspartate 259, 265-266 (RK), alanine 282, and lysine 286. Residue aspartate 259 coordinates L-methionine. An L-methionine-binding site is contributed by lysine 290.

This sequence belongs to the AdoMet synthase family. As to quaternary structure, homotetramer; dimer of dimers. Mg(2+) is required as a cofactor. It depends on K(+) as a cofactor.

The protein resides in the cytoplasm. The enzyme catalyses L-methionine + ATP + H2O = S-adenosyl-L-methionine + phosphate + diphosphate. The protein operates within amino-acid biosynthesis; S-adenosyl-L-methionine biosynthesis; S-adenosyl-L-methionine from L-methionine: step 1/1. In terms of biological role, catalyzes the formation of S-adenosylmethionine (AdoMet) from methionine and ATP. The overall synthetic reaction is composed of two sequential steps, AdoMet formation and the subsequent tripolyphosphate hydrolysis which occurs prior to release of AdoMet from the enzyme. The protein is S-adenosylmethionine synthase of Mycobacterium avium (strain 104).